The sequence spans 464 residues: MYYSNKMSKVITGKQYSWSELAKHNTENDCWVAVDGKVYDITRWVPLHPGGKEVLLLAAGRDVTNLFESYHPMSDKPTSILKNYEIGYISSYEHPKFVQKSDFYKTLKERVRKHFKATDQDPQMAVSIFSRLALVYLLVFVTYYLAHYTSNNFYLNCFLAIVYALCNSLFSMHMMHDSCHAAISHYPGVWKWMGASFDFVTGASFLSWCHQHVIGHHIYTNVRNADPDLGQGEVDFRIVTPFQTRSWYHKYQHIYAPLLYGIYTLKYRTQDWEAFVKDGKNGAIRVSVATNFDKAAYVIGKLSFVFFRFILPLRYHSFTDLICYFLIAEFVFGWYLTINFQVSHVAEDLKFFATPERPDEPSQINEDWAILQLKTTQDYGHGSLLCTFFSGSLNHQVVHHLFPSIAQDFYPQLVPIVKEVCKEHNITYHIKPNFTEAIMSHINYLYKMGNDPDYVKKPLASKDD.

Positions 13–90 (GKQYSWSELA…LKNYEIGYIS (78 aa)) constitute a Cytochrome b5 heme-binding domain. Residues His48 and His71 each contribute to the heme site. Transmembrane regions (helical) follow at residues 125–145 (AVSIFSRLALVYLLVFVTYYL) and 153–173 (FYLNCFLAIVYALCNSLFSMH). The Histidine box-1 motif lies at 176-180 (HDSCH). A Histidine box-2 motif is present at residues 212-217 (HVIGHH). The chain crosses the membrane as a helical span at residues 318 to 338 (FTDLICYFLIAEFVFGWYLTI). The short motif at 396–400 (QVVHH) is the Histidine box-3 element.

The protein belongs to the fatty acid desaturase type 1 family. It depends on Fe cation as a cofactor.

The protein localises to the membrane. Its function is as follows. Specific for desaturation of the 5 position in C16 and C18 fatty acids. In Dictyostelium discoideum (Social amoeba), this protein is Delta(5) fatty acid desaturase A (fadA).